Consider the following 348-residue polypeptide: Rhodopsin (348 aa).

Residues 1 to 33 (TEGPYFYIPMVNTTGIVRSPYEYPQYYLVNPAA) lie on the Extracellular side of the membrane. N-linked (GlcNAc...) asparagine glycosylation occurs at N12. A helical membrane pass occupies residues 34 to 58 (YAMLGAYMFFLIIVGFPVNFMTLYV). Topologically, residues 59–70 (TLEHKKLRTPLN) are cytoplasmic. The chain crosses the membrane as a helical span at residues 71–93 (YILLNLAVADLFMVIGGFTTTIY). The Extracellular segment spans residues 94–107 (TSMHGYFVLGRLGC). A disulfide bridge links C107 with C184. A helical transmembrane segment spans residues 108 to 130 (NIEGFFATLGGMISLWSLAVLAI). The 'Ionic lock' involved in activated form stabilization signature appears at 131-133 (ERW). The Cytoplasmic segment spans residues 131-149 (ERWVVVCKPISNFRFGENH). Residues 150–170 (AIMGVSLTWAMALACTVPPLV) form a helical membrane-spanning segment. Residues 171-199 (GWSRYIPEGMQCSCGIDYYTRAEGFNNES) are Extracellular-facing. N-linked (GlcNAc...) asparagine glycosylation is present at N197. The helical transmembrane segment at 200–221 (FVLYMFFCHFTIPLTIIFFCYG) threads the bilayer. At 222–249 (RLLCAVKEAAAAQQESETTQRAEREVTR) the chain is on the cytoplasmic side. A helical transmembrane segment spans residues 250-271 (MVIIMVIGFLICWLPYASVAWF). The Extracellular segment spans residues 272–283 (IFTHQGSEFGPL). The chain crosses the membrane as a helical span at residues 284–305 (FMTIPAFFAKSSSIYNPMIYIC). K293 is modified (N6-(retinylidene)lysine). Topologically, residues 306-348 (MNKQFRHCMITTLFCGKNPFEGEEEGASSTKTEASSASSVSPA) are cytoplasmic. C320 carries the S-palmitoyl cysteine lipid modification. The disordered stretch occupies residues 327–348 (GEEEGASSTKTEASSASSVSPA). Positions 332-348 (ASSTKTEASSASSVSPA) are enriched in low complexity.

The protein belongs to the G-protein coupled receptor 1 family. Opsin subfamily. In terms of processing, phosphorylated on some or all of the serine and threonine residues present in the C-terminal region. Post-translationally, contains one covalently linked retinal chromophore.

The protein resides in the membrane. It localises to the cell projection. The protein localises to the cilium. Its subcellular location is the photoreceptor outer segment. Its function is as follows. Photoreceptor required for image-forming vision at low light intensity. While most salt water fish species use retinal as chromophore, most freshwater fish use 3-dehydroretinal, or a mixture of retinal and 3-dehydroretinal. Light-induced isomerization of 11-cis to all-trans retinal triggers a conformational change that activates signaling via G-proteins. Subsequent receptor phosphorylation mediates displacement of the bound G-protein alpha subunit by arrestin and terminates signaling. The polypeptide is Rhodopsin (rho) (Sargocentron microstoma (Smallmouth squirrelfish)).